The primary structure comprises 135 residues: Fatty acid-binding protein 5 (135 aa).

A2 carries the N-acetylalanine modification. K17 is modified (N6-acetyllysine). The short motif at 24–34 (KELGVGIALRK) is the Nuclear localization signal element. N-eicosanoyl ethanolamine contacts are provided by C43 and R109. C120 and C127 are oxidised to a cystine. 129–131 (RIY) is a (9Z,12Z)-octadecadienoate binding site. Residue Y131 participates in N-eicosanoyl ethanolamine binding. Residue Y131 coordinates hexadecanoate. The residue at position 131 (Y131) is a Phosphotyrosine.

Belongs to the calycin superfamily. Fatty-acid binding protein (FABP) family. Monomer. Homodimer. In terms of tissue distribution, keratinocytes; highly expressed in psoriatic skin. Expressed in brain gray matter.

It is found in the cytoplasm. The protein resides in the nucleus. It localises to the synapse. The protein localises to the postsynaptic density. Its subcellular location is the secreted. It carries out the reaction hexadecanoate(out) = hexadecanoate(in). The enzyme catalyses (9Z,12Z)-octadecadienoate(out) = (9Z,12Z)-octadecadienoate(in). It catalyses the reaction (9Z)-octadecenoate(out) = (9Z)-octadecenoate(in). Its function is as follows. Intracellular carrier for long-chain fatty acids and related active lipids, such as endocannabinoids, that regulate the metabolism and actions of the ligands they bind. In addition to the cytosolic transport, selectively delivers specific fatty acids from the cytosol to the nucleus, wherein they activate nuclear receptors. Delivers retinoic acid to the nuclear receptor peroxisome proliferator-activated receptor delta; which promotes proliferation and survival. May also serve as a synaptic carrier of endocannabinoid at central synapses and thus controls retrograde endocannabinoid signaling. Modulates inflammation by regulating PTGES induction via NF-kappa-B activation, and prostaglandin E2 (PGE2) biosynthesis during inflammation. May be involved in keratinocyte differentiation. This Homo sapiens (Human) protein is Fatty acid-binding protein 5.